We begin with the raw amino-acid sequence, 562 residues long: Phosphoglucomutase-1 (562 aa).

M1 carries the post-translational modification N-acetylmethionine. K16 bears the N6-acetyllysine mark. R23 contributes to the alpha-D-glucose 1,6-bisphosphate binding site. T115 bears the Phosphothreonine mark. S117 provides a ligand contact to alpha-D-glucose 1,6-bisphosphate. Catalysis depends on S117, which acts as the Phosphoserine intermediate. Residue S117 coordinates Mg(2+). Residues S117 and S134 each carry the phosphoserine modification. A Phosphothreonine modification is found at T185. S213 carries the post-translational modification Phosphoserine. 3 residues coordinate Mg(2+): D288, D290, and D292. 2 residues coordinate alpha-D-glucose 1,6-bisphosphate: D292 and R293. N6-acetyllysine is present on K349. Y353 is modified (phosphotyrosine). T357 lines the alpha-D-glucose 1,6-bisphosphate pocket. Position 369 is a phosphoserine (S369). E376, S378, and K389 together coordinate alpha-D-glucose 1,6-bisphosphate. Position 378 is a phosphoserine (S378). K419 bears the N6-succinyllysine mark. T467 carries the phosphothreonine; by PAK1 modification. A phosphoserine mark is found at S477, S485, and S505. T507 is modified (phosphothreonine). 2 positions are modified to phosphoserine: S509 and S541.

This sequence belongs to the phosphohexose mutase family. As to quaternary structure, monomer. Requires Mg(2+) as cofactor. Post-translationally, phosphorylation at Thr-467 by PAK1 significantly enhances enzymatic activity.

The protein localises to the cytoplasm. It catalyses the reaction alpha-D-glucose 1-phosphate = alpha-D-glucose 6-phosphate. The enzyme catalyses O-phospho-L-seryl-[protein] + alpha-D-glucose 1-phosphate = alpha-D-glucose 1,6-bisphosphate + L-seryl-[protein]. The catalysed reaction is alpha-D-glucose 1,6-bisphosphate + L-seryl-[protein] = O-phospho-L-seryl-[protein] + alpha-D-glucose 6-phosphate. Catalyzes the reversible isomerization of alpha-D-glucose 1-phosphate to alpha-D-glucose 6-phosphate. The mechanism proceeds via the intermediate compound alpha-D-glucose 1,6-bisphosphate. This enzyme participates in both the breakdown and synthesis of glucose. The polypeptide is Phosphoglucomutase-1 (PGM1) (Bos taurus (Bovine)).